We begin with the raw amino-acid sequence, 2039 residues long: PHD finger protein 3 (2039 aa).

Ser97 and Ser125 each carry phosphoserine. The segment covering 144–168 has biased composition (polar residues); that stretch reads STIAKRSNAAPLSNTKKASGKTVST. The interval 144 to 178 is disordered; the sequence is STIAKRSNAAPLSNTKKASGKTVSTAKAGVKQPER. Phosphoserine is present on residues Ser283 and Ser299. A compositionally biased stretch (basic and acidic residues) spans 460 to 472; the sequence is ESHETANLQDDRN. 3 disordered regions span residues 460–492, 528–555, and 596–685; these read ESHETANLQDDRNSQSSSVSYLESKSVKSKHTK, VKRNTDVPESQQNFHRPVKVRKKQIDKE, and LSDK…SLDE. Low complexity predominate over residues 473–483; it reads SQSSSVSYLES. Residues 596 to 612 show a composition bias toward basic and acidic residues; sequence LSDKSHAHPGCLKEPHH. A compositionally biased stretch (polar residues) spans 617–640; sequence GHVSHSSQKQCHKPQQQAPAMKTN. Positions 642–670 are enriched in basic and acidic residues; sequence HVKEELEHPGVEHFKEEDKLKLKKPEKNL. Residue Lys644 forms a Glycyl lysine isopeptide (Lys-Gly) (interchain with G-Cter in SUMO2) linkage. Phosphoserine is present on Ser680. The PHD-type zinc-finger motif lies at 717 to 772; the sequence is SKQCGFCKKPHGNRFMVGCGRCDDWFHGDCVGLSLSQAQQMGEEDKEYVCVKCCAE. The interval 860 to 904 is disordered; that stretch reads GQPVLPRRSSEEKSEKIPKESTTVTCTGEKASKPGTHEKQEMKKK. Composition is skewed to basic and acidic residues over residues 867 to 878 and 889 to 900; these read RSSEEKSEKIPK and KASKPGTHEKQE. The region spanning 927–1046 is the TFIIS central domain; the sequence is IRQSVRHSLK…MIEKEQREVE (120 aa). Residue Lys964 forms a Glycyl lysine isopeptide (Lys-Gly) (interchain with G-Cter in SUMO2) linkage. A Phosphoserine modification is found at Ser1014. The disordered stretch occupies residues 1078 to 1109; sequence EPAANKSLEKPEGSEKQKEEVDSMSKDTTSQH. A compositionally biased stretch (basic and acidic residues) spans 1084–1102; sequence SLEKPEGSEKQKEEVDSMS. Residues Ser1133, Ser1148, and Ser1178 each carry the phosphoserine modification. 3 disordered regions span residues 1171 to 1191, 1360 to 1380, and 1581 to 1623; these read FEEEKQESPKSTFSPAPRPEM, STSHIAETPESAPPIALPPDK, and KQEE…VGKG. Over residues 1581–1598 the composition is skewed to basic and acidic residues; that stretch reads KQEETVESKEKTLKRQLQ. Phosphoserine is present on residues Ser1614 and Ser1642. Disordered stretches follow at residues 1643–1684 and 1776–1800; these read PQFI…LPGL and PSKSITFTSRSTSPRTSTNFSPMRP. Residues 1666–1684 are compositionally biased toward basic and acidic residues; sequence ESKDGDSCRNGEKHMLPGL. The span at 1781–1797 shows a compositional bias: low complexity; it reads TFTSRSTSPRTSTNFSP. Asymmetric dimethylarginine is present on residues Arg1867 and Arg1877. The disordered stretch occupies residues 1884 to 2039; sequence FYQVKDIRRP…DHTDRTKSKR (156 aa). Composition is skewed to basic and acidic residues over residues 1888-1902 and 1912-2039; these read KDIRRPERRHSDPWG and PFNR…KSKR. Phosphoserine is present on residues Ser1898 and Ser1925. Residue Lys1931 forms a Glycyl lysine isopeptide (Lys-Gly) (interchain with G-Cter in SUMO2) linkage.

As to expression, ubiquitous. Expression is significantly reduced or lost in glioblastomas, glioblastoma cell lines, anaplastic astrocytomas, and astrocytomas.

This chain is PHD finger protein 3 (PHF3), found in Homo sapiens (Human).